A 478-amino-acid chain; its full sequence is Multidrug resistance outer membrane protein MdtQ (478 aa).

The first 21 residues, 1-21 (MNRDSFYPAIACFPLLLMLAG), serve as a signal peptide directing secretion. Cysteine 22 is lipidated: N-palmitoyl cysteine. A lipid anchor (S-diacylglycerol cysteine) is attached at cysteine 22.

This sequence belongs to the outer membrane factor (OMF) (TC 1.B.17) family.

The protein resides in the cell outer membrane. In terms of biological role, could be involved in resistance to puromycin, acriflavine and tetraphenylarsonium chloride. The protein is Multidrug resistance outer membrane protein MdtQ (mdtQ) of Escherichia coli O157:H7.